Reading from the N-terminus, the 94-residue chain is Small ribosomal subunit protein bS18 (94 aa).

It belongs to the bacterial ribosomal protein bS18 family. Part of the 30S ribosomal subunit. Forms a tight heterodimer with protein bS6.

In terms of biological role, binds as a heterodimer with protein bS6 to the central domain of the 16S rRNA, where it helps stabilize the platform of the 30S subunit. The protein is Small ribosomal subunit protein bS18 of Leptothrix cholodnii (strain ATCC 51168 / LMG 8142 / SP-6) (Leptothrix discophora (strain SP-6)).